Reading from the N-terminus, the 425-residue chain is Meiotic recombination protein spo-11 (425 aa).

The interval 1-38 (MYEYSFNPNIDHEPGSVESQQSTIYSDSDDSDDSFLDD) is disordered. A Topo IIA-type catalytic domain is found at 15-158 (GSVESQQSTI…LNILSCGRGI (144 aa)). Residues 27–38 (DSDDSDDSFLDD) are compositionally biased toward acidic residues. Y119 serves as the catalytic O-(5'-phospho-DNA)-tyrosine intermediate. Mg(2+)-binding residues include E202 and D255.

It belongs to the TOP6A family. The cofactor is Mg(2+).

Its subcellular location is the nucleus. The enzyme catalyses ATP-dependent breakage, passage and rejoining of double-stranded DNA.. Its function is as follows. Required for meiotic recombination. Mediates DNA cleavage that forms the double-strand breaks (DSB) that initiate meiotic recombination. This is Meiotic recombination protein spo-11 (spo-11) from Caenorhabditis elegans.